Here is a 457-residue protein sequence, read N- to C-terminus: Cell division protein FtsA (457 aa).

It belongs to the FtsA/MreB family. In terms of assembly, self-interacts. Interacts with FtsZ.

It localises to the cell membrane. Its function is as follows. Cell division protein that is involved in the assembly of the Z ring. May serve as a membrane anchor for the Z ring. Increased expression restores growth to a PBP2b (penA) deletion strain as well as mreCD and rodA deletions, but not gpsB or rodZ deletions. Does not restore wild-type cell morphology to the penA deletion. The sequence is that of Cell division protein FtsA from Streptococcus pneumoniae serotype 2 (strain D39 / NCTC 7466).